A 28-amino-acid chain; its full sequence is Fibrinogen alpha chain (28 aa).

The residue at position 3 (Ser3) is a Phosphoserine.

As to quaternary structure, heterohexamer; disulfide linked. Contains 2 sets of 3 non-identical chains (alpha, beta and gamma). The 2 heterotrimers are in head to head conformation with the N-termini in a small central domain. Conversion of fibrinogen to fibrin is triggered by thrombin, which cleaves fibrinopeptides A and B from alpha and beta chains, and thus exposes the N-terminal polymerization sites responsible for the formation of the soft clot. The soft clot is converted into the hard clot by factor XIIIA which catalyzes the epsilon-(gamma-glutamyl)lysine cross-linking between gamma chains (stronger) and between alpha chains (weaker) of different monomers. In terms of processing, forms F13A-mediated cross-links between a glutamine and the epsilon-amino group of a lysine residue, forming fibronectin-fibrinogen heteropolymers.

Its subcellular location is the secreted. Functionally, cleaved by the protease thrombin to yield monomers which, together with fibrinogen beta (FGB) and fibrinogen gamma (FGG), polymerize to form an insoluble fibrin matrix. Fibrin has a major function in hemostasis as one of the primary components of blood clots. In addition, functions during the early stages of wound repair to stabilize the lesion and guide cell migration during re-epithelialization. Was originally thought to be essential for platelet aggregation, based on in vitro studies using anticoagulated blood. However, subsequent studies have shown that it is not absolutely required for thrombus formation in vivo. Enhances expression of SELP in activated platelets via an ITGB3-dependent pathway. Maternal fibrinogen is essential for successful pregnancy. Fibrin deposition is also associated with infection, where it protects against IFNG-mediated hemorrhage. May also facilitate the immune response via both innate and T-cell mediated pathways. The sequence is that of Fibrinogen alpha chain (FGA) from Canis lupus familiaris (Dog).